The primary structure comprises 231 residues: Cuticle protein LPCP-23 (231 aa).

The N-terminal stretch at 1-17 is a signal peptide; the sequence is MAFKFVVFAAALAYANA. Tandem repeats lie at residues 130–133 and 199–202.

In terms of biological role, component of the cuticle of Tenebrio molitor. The polypeptide is Cuticle protein LPCP-23 (LPCP-23) (Tenebrio molitor (Yellow mealworm beetle)).